We begin with the raw amino-acid sequence, 433 residues long: MEKIKLNLLNAIDSSEILNYKDQVKEINEKMNRFEMIGSDFLGWKDLPNQINWDEFLNMEEKAKWLIKENVEILVVIGIGGSYLGARAAIEFVNGTFPLSGSKKLEIIYAGTNLSSTATAQLLAYVENKKFAINIISKSGTTLEPSIAFRFFRELLEKKVGKAESRKFIIATTDANKGLLREIVRKEGYTSFIIPDDVGGRYSVLTPVGLFPMLCAGLNVREILVGAQKSNDFYKKSDLEENIAYQYAVARHIMHTQKKYAVEVLISYEPYFQYFLEWWKQLFGETEGKNELGLYPSSKIFSTDLHSLGQFIQEGSRILFETVINLKKPKIDLDISEDKENFDGINYLVNKTLHGINVAALDATVSAHTDVAKVPNIILEIADSTEETLGWLFMFFERACAMSAYLLNLNPFNQPGVEVYKANMFKILGKPKK.

Glu-285 serves as the catalytic Proton donor. Residues His-306 and Lys-421 contribute to the active site.

This sequence belongs to the GPI family.

It localises to the cytoplasm. The catalysed reaction is alpha-D-glucose 6-phosphate = beta-D-fructose 6-phosphate. It participates in carbohydrate biosynthesis; gluconeogenesis. Its pathway is carbohydrate degradation; glycolysis; D-glyceraldehyde 3-phosphate and glycerone phosphate from D-glucose: step 2/4. Catalyzes the reversible isomerization of glucose-6-phosphate to fructose-6-phosphate. This Mycoplasma mobile (strain ATCC 43663 / 163K / NCTC 11711) (Mesomycoplasma mobile) protein is Glucose-6-phosphate isomerase.